The following is a 183-amino-acid chain: TATA-box-binding protein 1 (183 aa).

A run of 2 repeats spans residues 8–84 (IENV…AKKL) and 99–177 (VQNI…RQQL).

The protein belongs to the TBP family.

In terms of biological role, general factor that plays a role in the activation of archaeal genes transcribed by RNA polymerase. Binds specifically to the TATA box promoter element which lies close to the position of transcription initiation. The chain is TATA-box-binding protein 1 from Methanosarcina acetivorans (strain ATCC 35395 / DSM 2834 / JCM 12185 / C2A).